A 1507-amino-acid chain; its full sequence is Chromatin-remodeling ATPase INO80 (1507 aa).

Disordered regions lie at residues 30 to 82 (PEDE…DAED) and 428 to 452 (RKKQ…KRQQ). The segment covering 38–67 (GSSSQDESRSTQGGVVANYSNGSKSRMNAS) has biased composition (polar residues). Residues 350–475 (AWINIVRRDI…SHFMQNKTDS (126 aa)) enclose the DBINO domain. The segment covering 428–450 (RKKQEKEAAEAFKREQEQRESKR) has biased composition (basic and acidic residues). Residues 598 to 769 (VNCYEQGLNG…WALLHFIMPM (172 aa)) form the Helicase ATP-binding domain. 611–618 (DEMGLGKT) contacts ATP. The 151-residue stretch at 1210 to 1360 (TLDILLKRLR…QLVMTGGHVQ (151 aa)) folds into the Helicase C-terminal domain. A disordered region spans residues 1415 to 1507 (LEELEDVDRQ…KGFDPSSSAN (93 aa)). A compositionally biased stretch (polar residues) spans 1491–1507 (ASVTESNKGFDPSSSAN).

It belongs to the SNF2/RAD54 helicase family. In terms of assembly, component of the INO80 chromatin-remodeling complex. Associates with REF6/EIN6.

The protein localises to the nucleus. It catalyses the reaction ATP + H2O = ADP + phosphate + H(+). In terms of biological role, ATPase component of the chromatin remodeling INO80 complex which is involved in transcriptional regulation, DNA replication and DNA repair. Binds DNA. As part of the INO80 complex, remodels chromatin by shifting nucleosomes. The INO80 complex controls ethylene-induced H2A.Z eviction dynamics. Positive regulator of homologous recombination, but not an essential component of homologous recombination. Not involved in the illegitimate repair pathway. The chain is Chromatin-remodeling ATPase INO80 from Arabidopsis thaliana (Mouse-ear cress).